The following is a 247-amino-acid chain: Retbindin (247 aa).

The signal sequence occupies residues 1-31 (MAHEGHSQHSGLVWALRPILAWIFLVACGWS). Intrachain disulfides connect cysteine 99/cysteine 169, cysteine 106/cysteine 146, cysteine 139/cysteine 183, and cysteine 152/cysteine 165.

It belongs to the folate receptor family. Not N-glycosylated. In terms of tissue distribution, expressed in the peripheral retina where it localizes to the inter-photoreceptor matrix (at protein level). May be produced by rod photoreceptors (at protein level).

Its subcellular location is the secreted. It localises to the extracellular space. The protein localises to the extracellular matrix. It is found in the interphotoreceptor matrix. The protein resides in the cell membrane. Riboflavin-binding protein which might have a role in retinal flavin transport. The protein is Retbindin (Rtbdn) of Mus musculus (Mouse).